Here is a 239-residue protein sequence, read N- to C-terminus: Heptaprenylglyceryl phosphate synthase (239 aa).

Sn-glycerol 1-phosphate is bound at residue Lys12. Mg(2+) contacts are provided by Asp14 and Thr40. Residues Tyr159–Gly164, Gly189, and Gly209–Asn210 each bind sn-glycerol 1-phosphate.

It belongs to the GGGP/HepGP synthase family. Group I subfamily. Homodimer. The cofactor is Mg(2+).

It catalyses the reaction sn-glycerol 1-phosphate + all-trans-heptaprenyl diphosphate = 3-heptaprenyl-sn-glycero-1-phosphate + diphosphate. It functions in the pathway membrane lipid metabolism; glycerophospholipid metabolism. Its function is as follows. Prenyltransferase that catalyzes in vivo the transfer of the heptaprenyl moiety of heptaprenyl pyrophosphate (HepPP; 35 carbon atoms) to the C3 hydroxyl of sn-glycerol-1-phosphate (G1P), producing heptaprenylglyceryl phosphate (HepGP). This reaction is an ether-bond-formation step in the biosynthesis of archaea-type G1P-based membrane lipids found in Bacillales. This is Heptaprenylglyceryl phosphate synthase from Geobacillus thermodenitrificans (strain NG80-2).